Consider the following 97-residue polypeptide: Mapk-regulated corepressor-interacting protein 1 (97 aa).

Polar residues predominate over residues 1–26 (MTSSSTPRMHTYKRTSSPRSPTNTGE). 2 disordered regions span residues 1–27 (MTSSSTPRMHTYKRTSSPRSPTNTGEL) and 54–97 (QNHE…SKKS). Basic and acidic residues-rich tracts occupy residues 54-68 (QNHERNDRGPQEYVE) and 84-97 (SDLKKRNTQDSKKS). A PXDLS motif motif is present at residues 80-84 (PVDLS).

It belongs to the MCRIP family.

It localises to the nucleus. Its subcellular location is the cytoplasm. The protein resides in the stress granule. Its function is as follows. May play a role in the regulation of the epithelial-mesenchymal transition. The protein is Mapk-regulated corepressor-interacting protein 1 (mcrip1) of Danio rerio (Zebrafish).